The sequence spans 878 residues: MEHRKPGTGQRAPKDEKEMVRRAIQKELKIKEGMENMRRVATDRRHLGHVQQLLRASNRRLEQLHGELRELHAQVLLPASAEPVTSEPQPRAEQSRARLSEALHRQLQVELKVKQGAENMIHTCASGTPKERKLLAAAQQMLKDSQLKVALLRMKISSLESSGSPEPGPDLLAEELQHRLRVEAAVAAGAKNVVKLLGGQRMQDRKALAEAQAQLQESSQKLDLLRLALELLLERLPPTHSLRSRVTQELWMAMLGNPQPLGTLVKPIALTGTLQVRLLGCKDLLVAVPGRSPMAVLAGSPSESWLRTRSRQQRGGGELASEVLAVLKVDNRVVGQTGWGLVAEKSWDQSFIISLDRARELEIGVHWRDWRQLCGVAFLKLEDFLDNACHQLSLSLVPQGRLFAQVTFCEPVIERRPRLQRQRCIFSKRRGRDFMRASQMNLSMAAWGRLVMSLLPPCSSPNTASPPKGRPSTAVCGTPSAASPSNFLPMKTLSKEDTKPPPKPPRLYLQEPAPGTPCTKRPHMDPRPAVVPALAALSTRKPPRLQDFRCLAVLGRGHFGKVLLVQYKGTGKYYAIKALKKQEVLGRDEIDSLYCEKRILETVGRTGHPFLLSLLACLQTSSHACFVTEFLPGGDLMAQIHEDVFPEPQACFYLACVVLGLQFLHEKRIIYRDLKLDNLLLDAQGFLKIADFGLCKEGIGFGDRTSTFCGTPEFLAPEVLTQEAYTRAVDWWGLGVLLYEMLVGECPFPGDTEEEVFECIVSADVPCPHFLSVQGLELIQKLLQKSPEKRLGAGERDAEEIKVQPFFRTTNWQALLARTVQPPFVPTLCGPADLRYFEGEFTSLPPTLTPPVSQSSLTARQQAAFRDFDFVSEQFLES.

3 consecutive REM-1 domains span residues 2-77 (EHRK…QVLL), 86-165 (SEPQ…SGSP), and 169-238 (PDLL…RLPP). Phosphoserine is present on serine 164. Residues 461-525 (PNTASPPKGR…TPCTKRPHMD (65 aa)) are disordered. The Protein kinase domain maps to 548 to 807 (FRCLAVLGRG…AEEIKVQPFF (260 aa)). ATP contacts are provided by residues 554-562 (LGRGHFGKV) and lysine 577. The active-site Proton acceptor is the aspartate 673. A phosphothreonine mark is found at threonine 707, threonine 711, and threonine 849. The 71-residue stretch at 808 to 878 (RTTNWQALLA…DFVSEQFLES (71 aa)) folds into the AGC-kinase C-terminal domain.

Belongs to the protein kinase superfamily. AGC Ser/Thr protein kinase family. PKC subfamily. Post-translationally, autophosphorylated.

The protein localises to the nucleus. Its subcellular location is the cytoplasm. It is found in the perinuclear region. The catalysed reaction is L-seryl-[protein] + ATP = O-phospho-L-seryl-[protein] + ADP + H(+). It catalyses the reaction L-threonyl-[protein] + ATP = O-phospho-L-threonyl-[protein] + ADP + H(+). Two specific sites, Thr-707 (activation loop of the kinase domain) and Thr-849 (turn motif), need to be phosphorylated for its full activation. Contributes to invasiveness in malignant prostate cancer. The polypeptide is Serine/threonine-protein kinase N3 (Pkn3) (Mus musculus (Mouse)).